A 263-amino-acid polypeptide reads, in one-letter code: Undecaprenyl-diphosphatase (263 aa).

Transmembrane regions (helical) follow at residues 38–58, 75–95, 108–128, 135–155, 181–201, 217–237, and 242–262; these read RSDF…CLAL, RDYV…GLIV, PVAW…HFAG, VVTW…GVFP, FVFM…LLEM, VAFI…LGYI, and FTVF…WLPA.

Belongs to the UppP family.

The protein resides in the cell inner membrane. It catalyses the reaction di-trans,octa-cis-undecaprenyl diphosphate + H2O = di-trans,octa-cis-undecaprenyl phosphate + phosphate + H(+). Catalyzes the dephosphorylation of undecaprenyl diphosphate (UPP). Confers resistance to bacitracin. This is Undecaprenyl-diphosphatase from Xanthomonas campestris pv. campestris (strain 8004).